Here is a 602-residue protein sequence, read N- to C-terminus: Sodium- and chloride-dependent GABA transporter 2 (602 aa).

Residues 1–40 lie on the Cytoplasmic side of the membrane; sequence MENRASGTTSNGETKPVCPAMEKVEEDGTLEREHWNNKME. The next 3 helical transmembrane spans lie at 41 to 61, 68 to 88, and 121 to 141; these read FVLSVAGEIIGLGNVWRFPYL, GAFFIPYLIFLFTCGIPVFFL, and IVSLLNVYYIVVLAWALFYLF. At 142 to 206 the chain is on the extracellular side; the sequence is SSFTTDLPWG…GIQHLGSLRW (65 aa). A disulfide bridge connects residues Cys-153 and Cys-162. N-linked (GlcNAc...) asparagine glycosylation is found at Asn-169, Asn-173, and Asn-178. The next 2 membrane-spanning stretches (helical) occupy residues 207–227 and 233–253; these read ELVLCLLLAWIICYFCIWKGV and VVYFTATFPYLMLVVLLIRGV. A glycan (N-linked (GlcNAc...) asparagine) is linked at Asn-269. 7 consecutive transmembrane segments (helical) span residues 282 to 302, 319 to 339, 366 to 386, 418 to 438, 453 to 473, 490 to 510, and 528 to 548; these read AGTQIFFSFAICLGCLTALGS, ILNSSTSFMAGFAIFSILGFM, VVMLPFSPLWACCFFFMVVLL, VLILIVSVISFFIGLIMLTEG, GMCLLFVAIFESLCVAWVYGA, PLIKYCWLFFTPAVCLATFLF, and WWGDALGWLLALSSMICIPAW. Topologically, residues 549–602 are cytoplasmic; the sequence is SIYKLRTLKGPLRERLRQLVCPAEDLPQKNQPEPTAPATPMTSLLRLTELESNC. At Thr-587 the chain carries Phosphothreonine. Residue Ser-591 is modified to Phosphoserine.

This sequence belongs to the sodium:neurotransmitter symporter (SNF) (TC 2.A.22) family. SLC6A13 subfamily. As to expression, expressed at high levels in liver, followed by kidney and leptomeninges, and very low levels in the cerebellum (at protein level). In the brain, detected in some blood vessels (at protein level). In the kidney, expressed in the cortex, including parts of the proximal tubules, but not in the medulla (at protein level). In the liver, highest expression in periportal hepatocytes, with highest density at the vascular side (at protein level). Also detected at low levels in other organs, including skeletal muscle.

The protein resides in the cell membrane. Its subcellular location is the basolateral cell membrane. The enzyme catalyses 4-aminobutanoate(out) + chloride(out) + 2 Na(+)(out) = 4-aminobutanoate(in) + chloride(in) + 2 Na(+)(in). It carries out the reaction taurine(out) + chloride(out) + 2 Na(+)(out) = taurine(in) + chloride(in) + 2 Na(+)(in). The catalysed reaction is beta-alanine(out) + chloride(out) + 2 Na(+)(out) = beta-alanine(in) + chloride(in) + 2 Na(+)(in). It catalyses the reaction hypotaurine(out) + chloride(out) + 2 Na(+)(out) = hypotaurine(in) + chloride(in) + 2 Na(+)(in). Its activity is regulated as follows. Gamma-aminobutyric acid (GABA) transport is inhibited by beta-alanine, taurine, hypotaurine, beta-guanidinopropionic acid, 2,3-diaminopropionic acid, guvacine and nipecotic acid. Beta-alanine transport is inhibited by GABA. Taurine transport is inhibited by GABA, beta-alanine, SNAP-5114, nigericin, nipecotic acid and ouabain. Its function is as follows. Mediates sodium- and chloride-dependent transport of gamma-aminobutyric acid (GABA). Can also mediate transport of beta-alanine, taurine and hypotaurine and is the major taurine transporter in hepatocytes. This chain is Sodium- and chloride-dependent GABA transporter 2 (Slc6a13), found in Mus musculus (Mouse).